Here is a 180-residue protein sequence, read N- to C-terminus: Trafficking protein particle complex subunit 3 (180 aa).

Cys-68 carries the S-palmitoyl cysteine lipid modification.

It belongs to the TRAPP small subunits family. BET3 subfamily. As to quaternary structure, homodimer. Part of the multisubunit TRAPP (transport protein particle) complex.

It localises to the golgi apparatus. The protein resides in the cis-Golgi network. Its subcellular location is the endoplasmic reticulum. In terms of biological role, may play a role in vesicular transport from endoplasmic reticulum to Golgi. The polypeptide is Trafficking protein particle complex subunit 3 (TRAPPC3) (Gallus gallus (Chicken)).